A 286-amino-acid chain; its full sequence is uncharacterized protein (286 aa).

One can recognise an HTH lysR-type domain in the interval 1-58 (MLLEGIETLLVLSKEKTMSRTGSQLYISQSAVSKRIANLEKKLGKKLIVPAGRHIKLT). The H-T-H motif DNA-binding region spans 18–37 (MSRTGSQLYISQSAVSKRIA).

The protein belongs to the LysR transcriptional regulatory family.

This is an uncharacterized protein from Vibrio cholerae serotype O1 (strain ATCC 39315 / El Tor Inaba N16961).